The sequence spans 494 residues: ATP synthase subunit beta, plastid (494 aa).

An ATP-binding site is contributed by 169-176 (GGAGVGKT).

Belongs to the ATPase alpha/beta chains family. As to quaternary structure, F-type ATPases have 2 components, CF(1) - the catalytic core - and CF(0) - the membrane proton channel. CF(1) has five subunits: alpha(3), beta(3), gamma(1), delta(1), epsilon(1). CF(0) has four main subunits: a(1), b(1), b'(1) and c(9-12).

The protein localises to the plastid membrane. The catalysed reaction is ATP + H2O + 4 H(+)(in) = ADP + phosphate + 5 H(+)(out). In terms of biological role, produces ATP from ADP in the presence of a proton gradient across the membrane. The catalytic sites are hosted primarily by the beta subunits. In Cuscuta sandwichiana (Kauna'oa), this protein is ATP synthase subunit beta, plastid (atpB).